Reading from the N-terminus, the 939-residue chain is Translation initiation factor IF-2 (939 aa).

Over residues 81–94 (EEQSRKAYEKEQQL) the composition is skewed to basic and acidic residues. Disordered stretches follow at residues 81–303 (EEQS…KKVE) and 316–337 (TISG…KMRR). Residues 99 to 108 (SSAPSPAPAA) are compositionally biased toward low complexity. Composition is skewed to basic and acidic residues over residues 112–127 (EPVK…RHEP) and 148–173 (SPKE…EKAA). Over residues 178 to 189 (EAQPEAQSQQEP) the composition is skewed to low complexity. Positions 244-255 (FKENAAELKDEF) are enriched in basic and acidic residues. The span at 276–287 (AAGEGESTTGGE) shows a compositional bias: low complexity. The segment covering 292–301 (KKKKGKKKKK) has biased composition (basic residues). The segment covering 318–328 (SGMDDSGSSGS) has biased composition (low complexity). One can recognise a tr-type G domain in the interval 436–606 (TRPPVVTIMG…LTEAEVRELK (171 aa)). The G1 stretch occupies residues 445–452 (GHVDHGKT). Position 445–452 (445–452 (GHVDHGKT)) interacts with GTP. Positions 470 to 474 (GITQH) are G2. The segment at 492-495 (DTPG) is G3. GTP is bound by residues 492–496 (DTPGH) and 546–549 (NKID). The interval 546 to 549 (NKID) is G4. A G5 region spans residues 582–584 (SAK).

It belongs to the TRAFAC class translation factor GTPase superfamily. Classic translation factor GTPase family. IF-2 subfamily.

It localises to the cytoplasm. One of the essential components for the initiation of protein synthesis. Protects formylmethionyl-tRNA from spontaneous hydrolysis and promotes its binding to the 30S ribosomal subunits. Also involved in the hydrolysis of GTP during the formation of the 70S ribosomal complex. The protein is Translation initiation factor IF-2 of Chlorobaculum parvum (strain DSM 263 / NCIMB 8327) (Chlorobium vibrioforme subsp. thiosulfatophilum).